The following is a 471-amino-acid chain: Bifunctional protein GlmU (471 aa).

Residues 1-235 (MVAVAILAAG…YQEIFGINNR (235 aa)) form a pyrophosphorylase region. Residues 7-10 (LAAG), Lys21, Gln82, and 87-88 (GT) contribute to the UDP-N-acetyl-alpha-D-glucosamine site. Residue Asp112 coordinates Mg(2+). 4 residues coordinate UDP-N-acetyl-alpha-D-glucosamine: Gly149, Glu164, Asn179, and Asn233. Mg(2+) is bound at residue Asn233. The interval 236-256 (KHLAKAHEILQVRVKDDWMEA) is linker. The interval 257-471 (GVTLIDPDSI…SKKEENKSSP (215 aa)) is N-acetyltransferase. Residues Arg338 and Lys356 each coordinate UDP-N-acetyl-alpha-D-glucosamine. His368 acts as the Proton acceptor in catalysis. UDP-N-acetyl-alpha-D-glucosamine is bound by residues Tyr371 and Asn382. Acetyl-CoA contacts are provided by residues Ala385, 391–392 (NY), Ser410, Ala428, and Arg445.

It in the N-terminal section; belongs to the N-acetylglucosamine-1-phosphate uridyltransferase family. In the C-terminal section; belongs to the transferase hexapeptide repeat family. In terms of assembly, homotrimer. Mg(2+) serves as cofactor.

It localises to the cytoplasm. The enzyme catalyses alpha-D-glucosamine 1-phosphate + acetyl-CoA = N-acetyl-alpha-D-glucosamine 1-phosphate + CoA + H(+). The catalysed reaction is N-acetyl-alpha-D-glucosamine 1-phosphate + UTP + H(+) = UDP-N-acetyl-alpha-D-glucosamine + diphosphate. It participates in nucleotide-sugar biosynthesis; UDP-N-acetyl-alpha-D-glucosamine biosynthesis; N-acetyl-alpha-D-glucosamine 1-phosphate from alpha-D-glucosamine 6-phosphate (route II): step 2/2. The protein operates within nucleotide-sugar biosynthesis; UDP-N-acetyl-alpha-D-glucosamine biosynthesis; UDP-N-acetyl-alpha-D-glucosamine from N-acetyl-alpha-D-glucosamine 1-phosphate: step 1/1. Its pathway is bacterial outer membrane biogenesis; LPS lipid A biosynthesis. Functionally, catalyzes the last two sequential reactions in the de novo biosynthetic pathway for UDP-N-acetylglucosamine (UDP-GlcNAc). The C-terminal domain catalyzes the transfer of acetyl group from acetyl coenzyme A to glucosamine-1-phosphate (GlcN-1-P) to produce N-acetylglucosamine-1-phosphate (GlcNAc-1-P), which is converted into UDP-GlcNAc by the transfer of uridine 5-monophosphate (from uridine 5-triphosphate), a reaction catalyzed by the N-terminal domain. The protein is Bifunctional protein GlmU of Trichodesmium erythraeum (strain IMS101).